The primary structure comprises 163 residues: MEGFLDLYLELNVPSPVEEATWHRWFEVWLRELGVTDPCELSLCLTSDEHIRQLNREFRHIDAPTDVLAFAAEETSTPVELQKITGVRLLGDIVISVPTACAQAKAQGQRLSRELAWLASHGLLHLLGWDHPDELSLQRMLQQQHHLLAAIQEDLEVTHGQQP.

His-121, His-125, and His-131 together coordinate Zn(2+).

It belongs to the endoribonuclease YbeY family. The cofactor is Zn(2+).

The protein resides in the cytoplasm. Its function is as follows. Single strand-specific metallo-endoribonuclease involved in late-stage 70S ribosome quality control and in maturation of the 3' terminus of the 16S rRNA. The sequence is that of Endoribonuclease YbeY from Synechococcus sp. (strain JA-3-3Ab) (Cyanobacteria bacterium Yellowstone A-Prime).